We begin with the raw amino-acid sequence, 805 residues long: Leucine--tRNA ligase (805 aa).

Residues 40-51 (PYPSGSGLHVGH) carry the 'HIGH' region motif. Positions 576-580 (KMSKS) match the 'KMSKS' region motif. Residue lysine 579 participates in ATP binding.

It belongs to the class-I aminoacyl-tRNA synthetase family.

The protein resides in the cytoplasm. The enzyme catalyses tRNA(Leu) + L-leucine + ATP = L-leucyl-tRNA(Leu) + AMP + diphosphate. The protein is Leucine--tRNA ligase of Chlorobium luteolum (strain DSM 273 / BCRC 81028 / 2530) (Pelodictyon luteolum).